The chain runs to 297 residues: UTP--glucose-1-phosphate uridylyltransferase (297 aa).

It belongs to the UDPGP type 2 family.

The enzyme catalyses alpha-D-glucose 1-phosphate + UTP + H(+) = UDP-alpha-D-glucose + diphosphate. It participates in carbohydrate metabolism; nucleotide-sugar metabolism. The protein operates within bacterial outer membrane biogenesis; lipopolysaccharide biosynthesis. May play a role in stationary phase survival. This Salmonella typhimurium (strain LT2 / SGSC1412 / ATCC 700720) protein is UTP--glucose-1-phosphate uridylyltransferase (galF).